Here is a 114-residue protein sequence, read N- to C-terminus: Turripeptide OL22 (114 aa).

Contains 6 disulfide bonds. In terms of tissue distribution, expressed by the venom duct.

Its subcellular location is the secreted. Functionally, acts as a neurotoxin by inhibiting an ion channel. This Iotyrris olangoensis (Sea snail) protein is Turripeptide OL22.